The sequence spans 263 residues: Small ribosomal subunit protein uS2m (263 aa).

The N-terminal 15 residues, 1–15 (MLSRKLSPEQLVARR), are a transit peptide targeting the mitochondrion.

Belongs to the universal ribosomal protein uS2 family. Component of the mitochondrial small ribosomal subunit (mt-SSU). Mature yeast 74S mitochondrial ribosomes consist of a small (37S) and a large (54S) subunit. The 37S small subunit contains a 15S ribosomal RNA (15S mt-rRNA) and at least 32 different proteins. The 54S large subunit contains a 21S rRNA (21S mt-rRNA) and at least 45 different proteins.

The protein resides in the mitochondrion. Its function is as follows. Component of the mitochondrial ribosome (mitoribosome), a dedicated translation machinery responsible for the synthesis of mitochondrial genome-encoded proteins, including at least some of the essential transmembrane subunits of the mitochondrial respiratory chain. The mitoribosomes are attached to the mitochondrial inner membrane and translation products are cotranslationally integrated into the membrane. This Schizosaccharomyces pombe (strain 972 / ATCC 24843) (Fission yeast) protein is Small ribosomal subunit protein uS2m.